A 546-amino-acid polypeptide reads, in one-letter code: Sterol O-acyltransferase 1 (546 aa).

Methionine 1 carries the N-acetylmethionine modification. Residues 1-37 are disordered; the sequence is MVGEEKMSLRNRLSKSGENPEQDEAQRSVSDTQSNGR. The Cytoplasmic portion of the chain corresponds to 1 to 134; that stretch reads MVGEEKMSLR…LDELFEVDHI (134 aa). Serine 8 is modified (phosphoserine). Residues 27-37 are compositionally biased toward polar residues; it reads RSVSDTQSNGR. Residue histidine 133 coordinates cholesterol. Residues 135 to 156 traverse the membrane as a helical segment; it reads RTIYHMFIGLLILFILSTLVVD. At 157-176 the chain is on the lumenal side; it reads YIDEGRLVLEFNLLGYAFGK. The helical transmembrane segment at 177–202 threads the bilayer; the sequence is LPTVIWTWWAMFLSTLSIPYFLFQRW. Topologically, residues 203 to 214 are cytoplasmic; it reads AHGYSKTSHPLI. A helical membrane pass occupies residues 215-240; the sequence is YSLSHGFFFLVFQLGILGFVPTYVVL. Residues 241–248 are Lumenal-facing; the sequence is AYTLPPAS. A helical transmembrane segment spans residues 249–272; the sequence is RFIVILEQIRMVMKAHSFVRENVP. Over 273-315 the chain is Cytoplasmic; sequence RVLNAAKEKSSTVPVPTVNQYLYFLFAPTLIYRDSYPRTPTVR. Residues 316–348 traverse the membrane as a helical segment; it reads WGYVAVQFLQVFGCLFYVYYIFERLCAPLFRNI. Residues 349-365 lie on the Lumenal side of the membrane; that stretch reads KQEPFSARVLVLCVFNS. Residues 366-391 traverse the membrane as a helical segment; sequence ILPGVLMLFLTFFAFLHCWLNAFAEM. Topologically, residues 392 to 439 are cytoplasmic; the sequence is LRFGDRMFYKDWWNSTSYSNYYRTWNVVVHDWLYYYAYKDLLWFFSKR. The FYXDWWN motif signature appears at 399-405; the sequence is FYKDWWN. An acyl-CoA contacts are provided by asparagine 411, arginine 414, asparagine 417, histidine 421, tyrosine 429, lysine 441, and serine 452. A helical transmembrane segment spans residues 440 to 464; that stretch reads FKSAAMLAVFALSAVVHEYALAVCL. Residue histidine 456 is part of the active site. Over 465 to 470 the chain is Lumenal; the sequence is SYFYPV. The chain crosses the membrane as a helical span at residues 471-486; it reads LFVLFMFFGMAFNFIV. The Cytoplasmic segment spans residues 487-492; that stretch reads NDSRKR. Residues 493 to 524 traverse the membrane as a helical segment; sequence PIWNIMVWASLFLGHGVILCFYSQEWYARQHC. An intrachain disulfide couples cysteine 524 to cysteine 542. Residues 525–546 lie on the Lumenal side of the membrane; that stretch reads PLKNPTFLDYVRPRSWTCQYVF.

Belongs to the membrane-bound acyltransferase family. Sterol o-acyltransferase subfamily. May form homo- or heterodimers. Interacts with UBIAD1.

Its subcellular location is the endoplasmic reticulum membrane. It carries out the reaction a sterol + a long-chain fatty acyl-CoA = a long-chain 3-hydroxysterol ester + CoA. The catalysed reaction is cholesterol + an acyl-CoA = a cholesterol ester + CoA. The enzyme catalyses cholesterol + (9Z)-octadecenoyl-CoA = cholesteryl (9Z-octadecenoate) + CoA. It catalyses the reaction cholesterol + hexadecanoyl-CoA = cholesteryl hexadecanoate + CoA. It carries out the reaction octadecanoyl-CoA + cholesterol = cholesteryl octadecanoate + CoA. The catalysed reaction is (9Z,12Z)-octadecadienoyl-CoA + cholesterol = cholesteryl (9Z,12Z)-octadecadienoate + CoA. The enzyme catalyses (5Z,8Z,11Z,14Z)-eicosatetraenoyl-CoA + cholesterol = cholesteryl (5Z,8Z,11Z,14Z)-eicosatetraenoate + CoA. It catalyses the reaction (9Z)-hexadecenoyl-CoA + cholesterol = cholesteryl (9Z)-hexadecenoate + CoA. It carries out the reaction (11Z)-octadecenoyl-CoA + cholesterol = cholesteryl (11Z)-octadecenoate + CoA. The catalysed reaction is (7Z)-octadecenoyl-CoA + cholesterol = cholesteryl (7Z)-octadecenoate + CoA. In terms of biological role, catalyzes the formation of fatty acid-cholesterol esters, which are less soluble in membranes than cholesterol. Plays a role in lipoprotein assembly and dietary cholesterol absorption. Preferentially utilizes oleoyl-CoA ((9Z)-octadecenoyl-CoA) as a substrate: shows a higher activity towards an acyl-CoA substrate with a double bond at the delta-9 position (9Z) than towards saturated acyl-CoA or an unsaturated acyl-CoA with a double bond at the delta-7 (7Z) or delta-11 (11Z) positions. The sequence is that of Sterol O-acyltransferase 1 (SOAT1) from Cricetulus griseus (Chinese hamster).